The primary structure comprises 78 residues: ATP synthase subunit a (78 aa).

3 helical membrane passes run leucine 13 to serine 33, phenylalanine 35 to isoleucine 55, and serine 57 to alanine 77.

The protein belongs to the ATPase A chain family. F-type ATPases have 2 components, CF(1) - the catalytic core - and CF(0) - the membrane proton channel. CF(1) has five subunits: alpha(3), beta(3), gamma(1), delta(1), epsilon(1). CF(0) has three main subunits: a(1), b(2) and c(9-12). The alpha and beta chains form an alternating ring which encloses part of the gamma chain. CF(1) is attached to CF(0) by a central stalk formed by the gamma and epsilon chains, while a peripheral stalk is formed by the delta and b chains.

It localises to the cell membrane. Its function is as follows. Key component of the proton channel; it plays a direct role in the translocation of protons across the membrane. The protein is ATP synthase subunit a (atpB) of Alkalihalobacillus alcalophilus (Bacillus alcalophilus).